We begin with the raw amino-acid sequence, 163 residues long: UPF0262 protein RPC_4416 (163 aa).

The protein belongs to the UPF0262 family.

The sequence is that of UPF0262 protein RPC_4416 from Rhodopseudomonas palustris (strain BisB18).